A 197-amino-acid polypeptide reads, in one-letter code: MTRLEQLKQHLQDVFGNSITRLQECRNEVTIECQAPCLLEVANLLRDHKLLKFEQLIDLCGVDYADYGEGSWSGLRYATVYHFLSVSLNQRLRLRVFAPDDDFPVLPTVVDIWPVANWFERESFDLFGIMYEGHPDLRRLLTDYGFVGHPFRKDFPMIGNVEMRYDPERQRVVYQPVTIDPRNNVPRVIREEGFHHG.

It belongs to the complex I 30 kDa subunit family. As to quaternary structure, NDH-1 is composed of 14 different subunits. Subunits NuoB, C, D, E, F, and G constitute the peripheral sector of the complex.

The protein resides in the cell inner membrane. It catalyses the reaction a quinone + NADH + 5 H(+)(in) = a quinol + NAD(+) + 4 H(+)(out). Its function is as follows. NDH-1 shuttles electrons from NADH, via FMN and iron-sulfur (Fe-S) centers, to quinones in the respiratory chain. The immediate electron acceptor for the enzyme in this species is believed to be ubiquinone. Couples the redox reaction to proton translocation (for every two electrons transferred, four hydrogen ions are translocated across the cytoplasmic membrane), and thus conserves the redox energy in a proton gradient. This is NADH-quinone oxidoreductase subunit C from Methylobacillus flagellatus (strain ATCC 51484 / DSM 6875 / VKM B-1610 / KT).